The following is a 154-amino-acid chain: Myoglobin (154 aa).

A Globin domain is found at 2 to 148 (GLSDGEWQLV…FRNDMAAQYK (147 aa)). Serine 4 is subject to Phosphoserine. Histidine 65 serves as a coordination point for nitrite. Residue histidine 65 participates in O2 binding. Threonine 68 carries the phosphothreonine modification. Histidine 94 serves as a coordination point for heme b.

Monomer.

The protein resides in the cytoplasm. It localises to the sarcoplasm. The enzyme catalyses Fe(III)-heme b-[protein] + nitric oxide + H2O = Fe(II)-heme b-[protein] + nitrite + 2 H(+). The catalysed reaction is H2O2 + AH2 = A + 2 H2O. In terms of biological role, monomeric heme protein which primary function is to store oxygen and facilitate its diffusion within muscle tissues. Reversibly binds oxygen through a pentacoordinated heme iron and enables its timely and efficient release as needed during periods of heightened demand. Depending on the oxidative conditions of tissues and cells, and in addition to its ability to bind oxygen, it also has a nitrite reductase activity whereby it regulates the production of bioactive nitric oxide. Under stress conditions, like hypoxia and anoxia, it also protects cells against reactive oxygen species thanks to its pseudoperoxidase activity. The protein is Myoglobin of Rangifer tarandus (Reindeer).